Reading from the N-terminus, the 365-residue chain is tRNA(Met) cytidine acetate ligase (365 aa).

ATP contacts are provided by residues 7 to 20 (IAEFNPFHNGHKYL), Gly96, Asn152, and Arg175.

It belongs to the TmcAL family.

It localises to the cytoplasm. It carries out the reaction cytidine(34) in elongator tRNA(Met) + acetate + ATP = N(4)-acetylcytidine(34) in elongator tRNA(Met) + AMP + diphosphate. Its function is as follows. Catalyzes the formation of N(4)-acetylcytidine (ac(4)C) at the wobble position of elongator tRNA(Met), using acetate and ATP as substrates. First activates an acetate ion to form acetyladenylate (Ac-AMP) and then transfers the acetyl group to tRNA to form ac(4)C34. This is tRNA(Met) cytidine acetate ligase from Streptococcus pneumoniae serotype 4 (strain ATCC BAA-334 / TIGR4).